We begin with the raw amino-acid sequence, 542 residues long: Chaperonin GroEL (542 aa).

ATP-binding positions include Thr30–Pro33, Lys51, Asp87–Thr91, Gly415, Asn480–Ala482, and Asp496.

Belongs to the chaperonin (HSP60) family. As to quaternary structure, forms a cylinder of 14 subunits composed of two heptameric rings stacked back-to-back. Interacts with the co-chaperonin GroES.

The protein resides in the cytoplasm. It catalyses the reaction ATP + H2O + a folded polypeptide = ADP + phosphate + an unfolded polypeptide.. Functionally, together with its co-chaperonin GroES, plays an essential role in assisting protein folding. The GroEL-GroES system forms a nano-cage that allows encapsulation of the non-native substrate proteins and provides a physical environment optimized to promote and accelerate protein folding. This chain is Chaperonin GroEL, found in Tremblaya princeps.